The primary structure comprises 569 residues: MEFLPEPQHPPGPPTMDLEEPKGPEVPSEDHPSNTQWALGPRGPDTLSEMELDTSSVRALVQQLEALPSDLGGQFPDGAPCPLHIATGQGLATQENLDAGGLLSAEAGGDNLLGLLRCEASLPAQSVPPDPAQAAPRLLQPPEDPGGDPGWMEGTEPADNRSSSSSPELWLETAPLVTHRDPPVGTQSQETLASCPAVSEVPGPCGQEELMDGVLFGAKYLGSTQLLSERNPPPSTRMGQAQEAMDRVKAPEGETQPMTEVDIFISTKRVKVLAADSQDALMDHALQTISYIADIGPVLVLMARRRLAKRTTSQDRQRQLYKMLCHVFHSEDAQLIAQAIGQAFSIAYSQFLQENRIDPSQVGMQPSASASHPHNGDLDHFCNSQNCREVCIQKRPGEGLGVALVESGWGSLLPTAVIANLLHGGPAERCGALSIGDRVTAINGTSLVGLSLAACQAAVREVRRHSSVTLSIIHCPPVTTAVIHRPHVREQLGFCVENGIICSLLRGSAAERGGVRVGHRIIEVNGQSVVAMPHARIIQLLTETREIHIKTMPAATYRLLTGQEQPVYL.

N-acetylmethionine is present on Met1. Disordered regions lie at residues 1-53 (MEFL…MELD) and 124-168 (AQSV…SSPE). Residues 19–32 (EEPKGPEVPSEDHP) are compositionally biased toward basic and acidic residues. Positions 132–141 (AQAAPRLLQP) are enriched in low complexity. Phosphoserine is present on residues Ser166 and Ser367. Residues 212 to 376 (DGVLFGAKYL…SASASHPHNG (165 aa)) enclose the PID domain. 2 PDZ domains span residues 389–475 (EVCI…IIHC) and 480–554 (TAVI…TMPA).

In terms of assembly, binds to the cytoplasmic domain of amyloid protein (APP). Interacts with HIF1AN (via N-terminus). Interacts with NECAB3; seems to mediate the interaction between NECAB3 and HIF1AN. Ubiquitous.

It is found in the cytoplasm. Its subcellular location is the perinuclear region. Its function is as follows. May modulate processing of the amyloid-beta precursor protein (APP) and hence formation of APP-beta. May enhance the activity of HIF1A in macrophages by inhibiting the activity of HIF1AN. In Rattus norvegicus (Rat), this protein is Amyloid-beta A4 precursor protein-binding family A member 3 (Apba3).